A 221-amino-acid chain; its full sequence is Riboflavin kinase (221 aa).

The segment at 1–92 (MVTPEDLECL…YRLFGRQEKS (92 aa)) is H-T-H motif-like. A riboflavin kinase region spans residues 93–221 (LMLNGTVQSG…GDEVTIEVTL (129 aa)). 102–107 (GLGEGA) is a CDP binding site. Mg(2+)-binding residues include T131 and N133. 2 residues coordinate FMN: T188 and E196. Residue 201–204 (EGLR) coordinates CDP.

The protein belongs to the archaeal riboflavin kinase family. Mg(2+) is required as a cofactor.

It catalyses the reaction riboflavin + CTP = CDP + FMN + H(+). It participates in cofactor biosynthesis; FMN biosynthesis; FMN from riboflavin (CTP route): step 1/1. Its function is as follows. Catalyzes the CTP-dependent phosphorylation of riboflavin (vitamin B2) to form flavin mononucleotide (FMN). The protein is Riboflavin kinase (ribK) of Methanospirillum hungatei JF-1 (strain ATCC 27890 / DSM 864 / NBRC 100397 / JF-1).